The primary structure comprises 181 residues: MIIAITGTPGVGKSTVSNLLFEKLKSGGKDIACINITEVVSKNGLYLEKDIEMDSYVVDFDKLNKYIQSVGTEDLILDGHVSHYLNPDYIIVLRANPLLIKNRLESRNYSSEKVKENVEAELLDVCLVESIEKNDESKIFEIDCSEKDPEKIVNEILMFLDLKNPEYGNISWLEDYFYLIE.

Residues glycine 10, glycine 12, lysine 13, serine 14, and threonine 15 each contribute to the ATP site. The segment at 35-58 (NITEVVSKNGLYLEKDIEMDSYVV) is NMP. An LID region spans residues 106–116 (SRNYSSEKVKE). Positions 107 and 147 each coordinate ATP.

It belongs to the adenylate kinase family. AK6 subfamily. In terms of assembly, interacts with uS11. Not a structural component of 40S pre-ribosomes, but transiently interacts with them by binding to uS11.

The catalysed reaction is AMP + ATP = 2 ADP. The enzyme catalyses ATP + H2O = ADP + phosphate + H(+). Broad-specificity nucleoside monophosphate (NMP) kinase that catalyzes the reversible transfer of the terminal phosphate group between nucleoside triphosphates and monophosphates. Also has ATPase activity. Involved in the late maturation steps of the 30S ribosomal particles, specifically 16S rRNA maturation. While NMP activity is not required for ribosome maturation, ATPase activity is. Associates transiently with small ribosomal subunit protein uS11. ATP hydrolysis breaks the interaction with uS11. May temporarily remove uS11 from the ribosome to enable a conformational change of the ribosomal RNA that is needed for the final maturation step of the small ribosomal subunit. In Methanococcus maripaludis (strain C7 / ATCC BAA-1331), this protein is Putative adenylate kinase.